A 114-amino-acid chain; its full sequence is Large ribosomal subunit protein uL22 (114 aa).

It belongs to the universal ribosomal protein uL22 family. Part of the 50S ribosomal subunit.

Its function is as follows. This protein binds specifically to 23S rRNA; its binding is stimulated by other ribosomal proteins, e.g. L4, L17, and L20. It is important during the early stages of 50S assembly. It makes multiple contacts with different domains of the 23S rRNA in the assembled 50S subunit and ribosome. The globular domain of the protein is located near the polypeptide exit tunnel on the outside of the subunit, while an extended beta-hairpin is found that lines the wall of the exit tunnel in the center of the 70S ribosome. In Ehrlichia canis (strain Jake), this protein is Large ribosomal subunit protein uL22.